The chain runs to 431 residues: Adenylosuccinate lyase (431 aa).

Residues 4-5, 67-69, and 93-94 each bind N(6)-(1,2-dicarboxyethyl)-AMP; these read RY, RHD, and TS. The active-site Proton donor/acceptor is the His-141. Position 212 (Gln-212) interacts with N(6)-(1,2-dicarboxyethyl)-AMP. The Proton donor/acceptor role is filled by Ser-262. N(6)-(1,2-dicarboxyethyl)-AMP contacts are provided by residues Ser-263, 268 to 270, Asn-276, and 307 to 311; these read KRN and SAERI.

It belongs to the lyase 1 family. Adenylosuccinate lyase subfamily. In terms of assembly, homodimer and homotetramer. Residues from neighboring subunits contribute catalytic and substrate-binding residues to each active site.

It carries out the reaction N(6)-(1,2-dicarboxyethyl)-AMP = fumarate + AMP. The catalysed reaction is (2S)-2-[5-amino-1-(5-phospho-beta-D-ribosyl)imidazole-4-carboxamido]succinate = 5-amino-1-(5-phospho-beta-D-ribosyl)imidazole-4-carboxamide + fumarate. Its pathway is purine metabolism; AMP biosynthesis via de novo pathway; AMP from IMP: step 2/2. It participates in purine metabolism; IMP biosynthesis via de novo pathway; 5-amino-1-(5-phospho-D-ribosyl)imidazole-4-carboxamide from 5-amino-1-(5-phospho-D-ribosyl)imidazole-4-carboxylate: step 2/2. Functionally, catalyzes two reactions in de novo purine nucleotide biosynthesis. Catalyzes the breakdown of 5-aminoimidazole- (N-succinylocarboxamide) ribotide (SAICAR or 2-[5-amino-1-(5-phospho-beta-D-ribosyl)imidazole-4-carboxamido]succinate) to 5-aminoimidazole-4-carboxamide ribotide (AICAR or 5-amino-1-(5-phospho-beta-D-ribosyl)imidazole-4-carboxamide) and fumarate, and of adenylosuccinate (ADS or N(6)-(1,2-dicarboxyethyl)-AMP) to adenosine monophosphate (AMP) and fumarate. This chain is Adenylosuccinate lyase (purB), found in Staphylococcus saprophyticus subsp. saprophyticus (strain ATCC 15305 / DSM 20229 / NCIMB 8711 / NCTC 7292 / S-41).